The primary structure comprises 294 residues: Putative maltodextrin utilization protein YvdJ (294 aa).

Transmembrane regions (helical) follow at residues 35–55 (LSFL…VSFV), 184–204 (MIMM…TFVL), 228–248 (IAIC…MVHF), and 249–269 (DLIT…SFAF).

It localises to the cell membrane. Functionally, could have a role in maltodextrin utilization. The chain is Putative maltodextrin utilization protein YvdJ (yvdJ) from Bacillus subtilis (strain 168).